We begin with the raw amino-acid sequence, 701 residues long: Elongation factor G 1 (701 aa).

The tr-type G domain maps to 8 to 290 (VRYRNIGICA…AVVEYLPAPT (283 aa)). Residues 17–24 (AHVDAGKT), 88–92 (DTPGH), and 142–145 (NKMD) contribute to the GTP site.

This sequence belongs to the TRAFAC class translation factor GTPase superfamily. Classic translation factor GTPase family. EF-G/EF-2 subfamily.

The protein localises to the cytoplasm. Catalyzes the GTP-dependent ribosomal translocation step during translation elongation. During this step, the ribosome changes from the pre-translocational (PRE) to the post-translocational (POST) state as the newly formed A-site-bound peptidyl-tRNA and P-site-bound deacylated tRNA move to the P and E sites, respectively. Catalyzes the coordinated movement of the two tRNA molecules, the mRNA and conformational changes in the ribosome. The chain is Elongation factor G 1 from Saccharophagus degradans (strain 2-40 / ATCC 43961 / DSM 17024).